A 367-amino-acid polypeptide reads, in one-letter code: Aminomethyltransferase (367 aa).

The protein belongs to the GcvT family. As to quaternary structure, the glycine cleavage system is composed of four proteins: P, T, L and H.

The enzyme catalyses N(6)-[(R)-S(8)-aminomethyldihydrolipoyl]-L-lysyl-[protein] + (6S)-5,6,7,8-tetrahydrofolate = N(6)-[(R)-dihydrolipoyl]-L-lysyl-[protein] + (6R)-5,10-methylene-5,6,7,8-tetrahydrofolate + NH4(+). Functionally, the glycine cleavage system catalyzes the degradation of glycine. In Parasynechococcus marenigrum (strain WH8102), this protein is Aminomethyltransferase.